The chain runs to 103 residues: CLAVATA3/ESR (CLE)-related protein 16 (103 aa).

Residues 1–21 (MEACSRKRRRRRAYTTSTTGY) form the signal peptide. The disordered stretch occupies residues 71–103 (VSFTGQRREEENRDEVYKDDKRLVHTGPNPLHN). Over residues 76–93 (QRREEENRDEVYKDDKRL) the composition is skewed to basic and acidic residues. At proline 98 the chain carries Hydroxyproline. Proline 98 carries an O-linked (Ara...) hydroxyproline glycan.

Belongs to the CLV3/ESR signal peptide family. The O-glycosylation (arabinosylation) of the hydroxyproline Pro-98 enhances binding affinity of the CLE16p peptide for its receptor. Expressed in roots, stems, apex, seedlings, leaves, flowers and siliques.

It is found in the secreted. It localises to the extracellular space. Extracellular signal peptide that regulates cell fate. Represses root apical meristem maintenance. Regulates the transition of protophloem cells from proliferation to differentiation, thus impinging on postembryonic growth capacity of the root meristem; this signaling pathway requires CRN and CLV2. The protein is CLAVATA3/ESR (CLE)-related protein 16 of Arabidopsis thaliana (Mouse-ear cress).